The sequence spans 158 residues: 3-dehydroquinate dehydratase (158 aa).

Y22 functions as the Proton acceptor in the catalytic mechanism. Substrate contacts are provided by N74, H80, and D87. Catalysis depends on H100, which acts as the Proton donor. Substrate-binding positions include I101–S102 and R111.

It belongs to the type-II 3-dehydroquinase family. Homododecamer.

It carries out the reaction 3-dehydroquinate = 3-dehydroshikimate + H2O. The protein operates within metabolic intermediate biosynthesis; chorismate biosynthesis; chorismate from D-erythrose 4-phosphate and phosphoenolpyruvate: step 3/7. Functionally, catalyzes a trans-dehydration via an enolate intermediate. In Helicobacter hepaticus (strain ATCC 51449 / 3B1), this protein is 3-dehydroquinate dehydratase.